Reading from the N-terminus, the 211-residue chain is 5-formyltetrahydrofolate cyclo-ligase (211 aa).

4-8 (KQLLR) provides a ligand contact to ATP. Residues Glu56 and 152 to 156 (HGAGY) contribute to the substrate site. Residues 151-158 (GHGAGYYD) and Asp194 each bind ATP.

It belongs to the 5-formyltetrahydrofolate cyclo-ligase family. Post-translationally, N-glycosylated.

It is found in the mitochondrion. It carries out the reaction (6S)-5-formyl-5,6,7,8-tetrahydrofolate + ATP = (6R)-5,10-methenyltetrahydrofolate + ADP + phosphate. Only enzyme known to utilize 5-formyltetrahydrofolate (folinic acid) as substrate. Contributes to tetrahydrofolate metabolism in an alternative way of folate biosynthesis. May regulate carbon flow through the folate-dependent one-carbon metabolic network that supplies carbon for the biosynthesis of purines, thymidine and amino acids. The chain is 5-formyltetrahydrofolate cyclo-ligase (FAU1) from Saccharomyces cerevisiae (strain ATCC 204508 / S288c) (Baker's yeast).